The sequence spans 149 residues: MTEQRGVVEAFTDGACRGNPGPGGWGVLLRYGEHERELYGGEPETTNNRMELTAAIRALEALDRPCRVVLTTDSQYVRRGITEWLEGWKRRGWRTASRKPVLNQDLWQRLDELAAYHQVDWHWVRGHAGHAENERADALANQGIDELVA.

The RNase H type-1 domain maps to 4–145 (QRGVVEAFTD…ADALANQGID (142 aa)). Residues Asp13, Glu51, Asp73, and Asp137 each coordinate Mg(2+).

Belongs to the RNase H family. As to quaternary structure, monomer. Mg(2+) is required as a cofactor.

Its subcellular location is the cytoplasm. It carries out the reaction Endonucleolytic cleavage to 5'-phosphomonoester.. Its function is as follows. Endonuclease that specifically degrades the RNA of RNA-DNA hybrids. In Halorhodospira halophila (strain DSM 244 / SL1) (Ectothiorhodospira halophila (strain DSM 244 / SL1)), this protein is Ribonuclease H.